Reading from the N-terminus, the 624-residue chain is tRNA uridine 5-carboxymethylaminomethyl modification enzyme MnmG (624 aa).

FAD-binding positions include 13–18 (GGGHAG), valine 125, and serine 180. Residue 273-287 (GPRYCPSIEDKIVRF) coordinates NAD(+). Position 370 (glutamine 370) interacts with FAD.

This sequence belongs to the MnmG family. Homodimer. Heterotetramer of two MnmE and two MnmG subunits. FAD serves as cofactor.

Its subcellular location is the cytoplasm. NAD-binding protein involved in the addition of a carboxymethylaminomethyl (cmnm) group at the wobble position (U34) of certain tRNAs, forming tRNA-cmnm(5)s(2)U34. This Legionella pneumophila (strain Paris) protein is tRNA uridine 5-carboxymethylaminomethyl modification enzyme MnmG.